Consider the following 508-residue polypeptide: ATP synthase subunit alpha, chloroplastic (508 aa).

170–177 (GDRQTGKT) lines the ATP pocket.

Belongs to the ATPase alpha/beta chains family. F-type ATPases have 2 components, CF(1) - the catalytic core - and CF(0) - the membrane proton channel. CF(1) has five subunits: alpha(3), beta(3), gamma(1), delta(1), epsilon(1). CF(0) has four main subunits: a, b, b' and c.

It is found in the plastid. Its subcellular location is the chloroplast thylakoid membrane. The enzyme catalyses ATP + H2O + 4 H(+)(in) = ADP + phosphate + 5 H(+)(out). Its function is as follows. Produces ATP from ADP in the presence of a proton gradient across the membrane. The alpha chain is a regulatory subunit. The polypeptide is ATP synthase subunit alpha, chloroplastic (Lactuca sativa (Garden lettuce)).